The sequence spans 580 residues: Tetratricopeptide repeat protein 39C (580 aa).

3 TPR repeats span residues 312 to 345, 350 to 383, and 482 to 515; these read SLFM…AVDQ, HVCL…SRWS, and GLKH…ELCR.

The protein belongs to the TTC39 family.

The polypeptide is Tetratricopeptide repeat protein 39C (Ttc39c) (Mus musculus (Mouse)).